Here is a 247-residue protein sequence, read N- to C-terminus: Cell division protein ZapD (247 aa).

This sequence belongs to the ZapD family. As to quaternary structure, interacts with FtsZ.

It localises to the cytoplasm. Its function is as follows. Cell division factor that enhances FtsZ-ring assembly. Directly interacts with FtsZ and promotes bundling of FtsZ protofilaments, with a reduction in FtsZ GTPase activity. This chain is Cell division protein ZapD, found in Cronobacter sakazakii (strain ATCC BAA-894) (Enterobacter sakazakii).